A 46-amino-acid polypeptide reads, in one-letter code: uncharacterized protein (46 aa).

This is an uncharacterized protein from Haemophilus influenzae (strain ATCC 51907 / DSM 11121 / KW20 / Rd).